Consider the following 427-residue polypeptide: Enolase (427 aa).

Residue glutamine 163 coordinates (2R)-2-phosphoglycerate. Glutamate 205 serves as the catalytic Proton donor. Aspartate 242, glutamate 285, and aspartate 312 together coordinate Mg(2+). Residues lysine 337, arginine 366, serine 367, and lysine 388 each coordinate (2R)-2-phosphoglycerate. The active-site Proton acceptor is lysine 337.

This sequence belongs to the enolase family. Mg(2+) serves as cofactor.

Its subcellular location is the cytoplasm. The protein localises to the secreted. The protein resides in the cell surface. The enzyme catalyses (2R)-2-phosphoglycerate = phosphoenolpyruvate + H2O. It participates in carbohydrate degradation; glycolysis; pyruvate from D-glyceraldehyde 3-phosphate: step 4/5. Catalyzes the reversible conversion of 2-phosphoglycerate (2-PG) into phosphoenolpyruvate (PEP). It is essential for the degradation of carbohydrates via glycolysis. The sequence is that of Enolase from Laribacter hongkongensis (strain HLHK9).